A 650-amino-acid chain; its full sequence is SUMO-activating enzyme subunit 2 (650 aa).

ATP is bound by residues 25-30, aspartate 49, 57-60, lysine 73, 96-97, and 118-123; these read GAGGIG, NLNR, SI, and DNRAAR. 2 residues coordinate Zn(2+): cysteine 159 and cysteine 162. Cysteine 174 serves as the catalytic Glycyl thioester intermediate. Lysine 191 is covalently cross-linked (Glycyl lysine isopeptide (Lys-Gly) (interchain with G-Cter in SUMO)). Residue lysine 237 forms a Glycyl lysine isopeptide (Lys-Gly) (interchain with G-Cter in SUMO1) linkage. Residues lysine 258, lysine 282, and lysine 286 each participate in a glycyl lysine isopeptide (Lys-Gly) (interchain with G-Cter in SUMO) cross-link. Zn(2+) contacts are provided by cysteine 446 and cysteine 449. The interval 554-650 is disordered; the sequence is DAPDKAPAPS…DDDEDIIALD (97 aa). Polar residues predominate over residues 572–586; the sequence is ANGNKDSAQPSTSSK. Over residues 590–603 the composition is skewed to acidic residues; that stretch reads EDDDVLLVDSDEEP. A Phosphoserine modification is found at serine 599. Residues lysine 618 and lysine 630 each participate in a glycyl lysine isopeptide (Lys-Gly) (interchain with G-Cter in SUMO) cross-link. The segment covering 638–650 has biased composition (acidic residues); that stretch reads PADDDDEDIIALD.

This sequence belongs to the ubiquitin-activating E1 family. Heterodimer of sae1 and uba2/sae2. The heterodimer corresponds to the two domains that are encoded on a single polypeptide chain in ubiquitin-activating enzyme E1. Interacts with ube2i. Sumoylated with SUMO1 and SUMO2/3 and by UBC9. Sumoylation at Lys-237 inhibits enzymatic activity. Sumoylation at the C-terminal lysine cluster plays an essential role in nuclear trafficking. As to expression, expressed in eye, brain and pectoral fins.

It localises to the cytoplasm. The protein resides in the nucleus. It functions in the pathway protein modification; protein sumoylation. Its function is as follows. The heterodimer acts as an E1 ligase for sumo1, sumo2, and sumo3. It mediates ATP-dependent activation of sumo proteins followed by formation of a thioester bond between a sumo protein and a conserved active site cysteine residue on uba2/sae2. The sequence is that of SUMO-activating enzyme subunit 2 (uba2) from Danio rerio (Zebrafish).